The sequence spans 796 residues: Cation/H(+) antiporter 6B (796 aa).

A run of 13 helical transmembrane segments spans residues 54-74 (DFWE…FLLW), 93-113 (SMML…IPCL), 131-151 (IGAF…DVGI), 159-179 (SVVI…LLYS), 194-213 (YTVM…NMLL), 223-243 (FGQI…FLTV), 259-279 (LAFM…LWVI), 285-305 (GAPV…LSYL), 310-330 (FLFF…NGPP), 344-364 (EGIF…WSFL), 382-402 (FSFL…AALA), 411-431 (IILG…VLTA), and 444-464 (LLGV…HFLY).

Belongs to the monovalent cation:proton antiporter 2 (CPA2) transporter (TC 2.A.37) family. CHX (TC 2.A.37.4) subfamily. Preferentially expressed in pollen.

Its subcellular location is the membrane. May operate as a cation/H(+) antiporter. The sequence is that of Cation/H(+) antiporter 6B (CHX6b) from Arabidopsis thaliana (Mouse-ear cress).